The chain runs to 473 residues: Allene oxide synthase CYP74A2 (473 aa).

Positions 88, 119, and 123 each coordinate heme b. S199 and K282 together coordinate (13S)-hydroperoxy-(9Z,11E)-octadecadienoate. Positions 424 and 426 each coordinate heme b.

This sequence belongs to the cytochrome P450 family. Heme b is required as a cofactor.

It catalyses the reaction (13S)-hydroperoxy-(9Z,11E,15Z)-octadecatrienoate = (9Z,13S,15Z)-12,13-epoxyoctadeca-9,11,15-trienoate + H2O. The catalysed reaction is (13S)-hydroperoxy-(9Z,11E)-octadecadienoate = (9Z,13S)-12,13-epoxyoctadeca-9,11-dienoate + H2O. The protein operates within lipid metabolism; oxylipin biosynthesis. Functionally, cytochrome P450 enzyme involved in the biosynthesis of oxylipin jasmonates, important phytohormones acting as growth regulators and signaling molecules for plant defense. Functions as an allene oxide synthase that converts hydroperoxy fatty acids to unstable allene epoxides. Catalyzes the dehydration of 13-HPOTE ((13S)-hydroperoxy-(9Z,11E,15Z)-octadecatrienoate). Also catalyzes the dehydration of 13-HPODE ((13S)-hydroperoxy-(9Z,11E)-octadecadienoate). This chain is Allene oxide synthase CYP74A2, found in Parthenium argentatum (Guayule rubber plant).